The following is a 334-amino-acid chain: MSSNARPTSVESPLAAQAPTKLVIASRESRLAMWQAEYVRAALQKYYPACDVSILGMTTRGDQILDRSLAKVGGKGLFVKELEVALAEGRADLAVHSLKDVPMELPPGFVLSAILEREDPRDAFVSNDYADLAALPAGAVVGTSSLRREASLRARFPHLVIQPLRGNLDTRLSKLDRGDYAAIILAAAGLKRLGLSERIRAVIAPETSLPAAGQGALGIESRVDRHDVQAWLAPLHHAPTALAVTAERAVSRQLGGSCQVPLAAFAQWTDAGALRLRAFVASPDGRRKLAAEAEATPATPAEAEALGARVAQQMLDGGAHDILATLGADAPPAT.

S-(dipyrrolylmethanemethyl)cysteine is present on Cys-258.

Belongs to the HMBS family. Monomer. Dipyrromethane is required as a cofactor.

It catalyses the reaction 4 porphobilinogen + H2O = hydroxymethylbilane + 4 NH4(+). Its pathway is porphyrin-containing compound metabolism; protoporphyrin-IX biosynthesis; coproporphyrinogen-III from 5-aminolevulinate: step 2/4. Functionally, tetrapolymerization of the monopyrrole PBG into the hydroxymethylbilane pre-uroporphyrinogen in several discrete steps. In Ralstonia nicotianae (strain ATCC BAA-1114 / GMI1000) (Ralstonia solanacearum), this protein is Porphobilinogen deaminase.